Consider the following 325-residue polypeptide: Protease HtpX homolog 2 (325 aa).

Helical transmembrane passes span 10–30 (LNMA…ALAV) and 41–61 (VGLI…QWLF). Residue histidine 147 coordinates Zn(2+). Glutamate 148 is an active-site residue. Histidine 151 serves as a coordination point for Zn(2+). Helical transmembrane passes span 159-179 (LLMA…WLFW) and 196-216 (LVFL…LLVL). Glutamate 223 is a binding site for Zn(2+).

This sequence belongs to the peptidase M48B family. Zn(2+) serves as cofactor.

The protein resides in the cell membrane. This Saccharolobus solfataricus (strain ATCC 35092 / DSM 1617 / JCM 11322 / P2) (Sulfolobus solfataricus) protein is Protease HtpX homolog 2.